The primary structure comprises 126 residues: Protein ApaG (126 aa).

In terms of domain architecture, ApaG spans 2 to 126; sequence SALDDSIRVE…FRLALPGLLH (125 aa).

The protein is Protein ApaG of Shewanella sp. (strain ANA-3).